Consider the following 278-residue polypeptide: Msm operon regulatory protein (278 aa).

In terms of domain architecture, HTH araC/xylS-type spans 176-274 (NQVKKIIHSQ…GKSPSKFRKE (99 aa)). 2 consecutive DNA-binding regions (H-T-H motif) follow at residues 193–214 (NDIA…RKST) and 241–264 (IAEI…KNYF).

Regulatory protein for the msm operon for multiple sugar metabolism. Activates the transcription of the msmEFGK, aga, dexB and gftA genes. In Streptococcus mutans serotype c (strain ATCC 700610 / UA159), this protein is Msm operon regulatory protein (msmR).